The following is a 220-amino-acid chain: Membrane steroid-binding protein 1 (220 aa).

Residues 22–42 traverse the membrane as a helical segment; sequence VVFFTALALAFAIYQVISGWF. One can recognise a Cytochrome b5 heme-binding domain in the interval 74 to 171; it reads EITEEELKQY…SKYAKVGTVK (98 aa). The steroid-binding stretch occupies residues 74–171; sequence EITEEELKQY…SKYAKVGTVK (98 aa). Positions 174-220 are disordered; sequence GSEPETASVSEPTENVEQDAHVTTTPGKTVVDKSDDAPAETVLKKEE. Over residues 178–200 the composition is skewed to polar residues; that stretch reads ETASVSEPTENVEQDAHVTTTPG. Over residues 203-220 the composition is skewed to basic and acidic residues; sequence VVDKSDDAPAETVLKKEE.

This sequence belongs to the cytochrome b5 family. MAPR subfamily. As to quaternary structure, interacts with BAK1 (via extracellular region). In terms of tissue distribution, expressed in cotyledons, stems, roots, leaves, flower and silique stalks, pistils and stigmas, but not in anthers.

It localises to the cell membrane. It is found in the endosome membrane. Functionally, MSBP1 can bind to multiple steroid compounds with different affinities. Negatively regulates cell elongation and brassinosteroid signaling. May act as a coreceptor with BAK1 and enhances its endocytosis. This chain is Membrane steroid-binding protein 1 (MSBP1), found in Arabidopsis thaliana (Mouse-ear cress).